Consider the following 457-residue polypeptide: Cell division protein FtsZ (457 aa).

GTP-binding positions include 26–30, 115–117, Glu146, Lys150, and Asp193; these read GGGGN and GTG. The segment covering 429-447 has biased composition (basic and acidic residues); sequence KKDVVRSEESERPAFESER. The tract at residues 429-457 is disordered; sequence KKDVVRSEESERPAFESERSSSPTTISFN. Residues 448–457 show a composition bias toward polar residues; it reads SSSPTTISFN.

Belongs to the FtsZ family. As to quaternary structure, homodimer. Polymerizes to form a dynamic ring structure in a strictly GTP-dependent manner. Interacts directly with several other division proteins.

The protein localises to the cytoplasm. Essential cell division protein that forms a contractile ring structure (Z ring) at the future cell division site. The regulation of the ring assembly controls the timing and the location of cell division. One of the functions of the FtsZ ring is to recruit other cell division proteins to the septum to produce a new cell wall between the dividing cells. Binds GTP and shows GTPase activity. This Porphyromonas gingivalis (strain ATCC BAA-308 / W83) protein is Cell division protein FtsZ.